A 473-amino-acid chain; its full sequence is tRNA modification GTPase MnmE (473 aa).

Residues Arg-31, Glu-95, and Arg-134 each coordinate (6S)-5-formyl-5,6,7,8-tetrahydrofolate. The TrmE-type G domain occupies 230–394; the sequence is GVSTVIAGKP…LKQHMGDLVK (165 aa). GTP is bound by residues 240-245, 259-265, and 284-287; these read NAGKST, SHMPGTT, and DTAG. Residues Ser-244 and Thr-265 each contribute to the Mg(2+) site. Residue Lys-473 coordinates (6S)-5-formyl-5,6,7,8-tetrahydrofolate.

The protein belongs to the TRAFAC class TrmE-Era-EngA-EngB-Septin-like GTPase superfamily. TrmE GTPase family. Homodimer. Heterotetramer of two MnmE and two MnmG subunits. The cofactor is K(+).

The protein localises to the cytoplasm. In terms of biological role, exhibits a very high intrinsic GTPase hydrolysis rate. Involved in the addition of a carboxymethylaminomethyl (cmnm) group at the wobble position (U34) of certain tRNAs, forming tRNA-cmnm(5)s(2)U34. The protein is tRNA modification GTPase MnmE of Chlorobaculum tepidum (strain ATCC 49652 / DSM 12025 / NBRC 103806 / TLS) (Chlorobium tepidum).